Here is a 394-residue protein sequence, read N- to C-terminus: Protein NDRG1 (394 aa).

Ser2 is modified (N-acetylserine). Phosphoserine is present on residues Ser2, Ser319, and Ser326. The interval 325-394 (RSRTASGSSV…AGPKSMEVSC (70 aa)) is disordered. A compositionally biased stretch (polar residues) spans 327–339 (RTASGSSVTSLDG). A Phosphothreonine; by SGK1 modification is found at Thr328. Phosphoserine; by SGK1 is present on residues Ser330 and Ser332. At Ser333 the chain carries Phosphoserine. Thr335 carries the post-translational modification Phosphothreonine. Ser336 carries the post-translational modification Phosphoserine. Repeat copies occupy residues 339 to 348 (GTRSRSHTSE), 349 to 358 (GTRSRSHTSE), and 359 to 368 (GTRSRSHTSE). The interval 339 to 368 (GTRSRSHTSEGTRSRSHTSEGTRSRSHTSE) is 3 X 10 AA tandem repeats of G-T-R-S-R-S-H-T-S-E. Phosphothreonine is present on Thr340. At Ser342 the chain carries Phosphoserine. Over residues 345 to 371 (HTSEGTRSRSHTSEGTRSRSHTSEGAH) the composition is skewed to basic and acidic residues. Residue Thr346 is modified to Phosphothreonine; by SGK1. The residue at position 352 (Ser352) is a Phosphoserine. At Thr356 the chain carries Phosphothreonine; by SGK1. Ser362 is modified (phosphoserine). The residue at position 364 (Ser364) is a Phosphoserine; by SGK1. Position 366 is a phosphothreonine; by SGK1 (Thr366). A Phosphothreonine modification is found at Thr375.

This sequence belongs to the NDRG family. Interacts with RAB4A (membrane-bound form); the interaction involves NDRG1 in vesicular recycling of CDH1. In terms of processing, under stress conditions, phosphorylated in the C-terminal on many serine and threonine residues. Phosphorylated in vitro by PKA. Phosphorylation enhanced by increased intracellular cAMP levels. Homocysteine induces dephosphorylation. Phosphorylation by SGK1 is cell cycle dependent. In terms of tissue distribution, ubiquitous; expressed most prominently in placental membranes and prostate, kidney, small intestine, and ovary tissues. Also expressed in heart, brain, skeletal muscle, lung, liver and pancreas. Low levels in peripheral blood leukocytes and in tissues of the immune system. Expressed mainly in epithelial cells. Also found in Schwann cells of peripheral neurons. Reduced expression in adenocarcinomas compared to normal tissues. In colon, prostate and placental membranes, the cells that border the lumen show the highest expression.

Its subcellular location is the cytoplasm. It is found in the cytosol. It localises to the cytoskeleton. The protein localises to the microtubule organizing center. The protein resides in the centrosome. Its subcellular location is the nucleus. It is found in the cell membrane. Its function is as follows. Stress-responsive protein involved in hormone responses, cell growth, and differentiation. Acts as a tumor suppressor in many cell types. Necessary but not sufficient for p53/TP53-mediated caspase activation and apoptosis. Has a role in cell trafficking, notably of the Schwann cell, and is necessary for the maintenance and development of the peripheral nerve myelin sheath. Required for vesicular recycling of CDH1 and TF. May also function in lipid trafficking. Protects cells from spindle disruption damage. Functions in p53/TP53-dependent mitotic spindle checkpoint. Regulates microtubule dynamics and maintains euploidy. The chain is Protein NDRG1 (NDRG1) from Homo sapiens (Human).